Reading from the N-terminus, the 331-residue chain is MARMYYDEDANLDLLAGKTIAIIGYGSQGHAHALNLKDSGLNVIVGLYPGSKSVAKAEAAGLTVKSVADAANAADFIMILLPDEVQKTIYKNEIEPNLEEGNVLAFAHGFNIHFGQVVPPANVDVVMVAPKGPGHLVRRTYEGGEGVPALFAVYQDASGQARDRAMSYAKGIGGTRAGVLETTFREETETDLFGEQAVLCGGLSALIKAGFETLVEAGYQPELAYFECLHEVKLIVDLVVEGGLAKMRDSISNTAEYGDYTRGPRIVTQQTKAEMQKILSEIQSGQFAREFVLENQSGKPGFTAMRRKESEHKIEEVGKDLRAMFSWLKKA.

The 181-residue stretch at 2-182 folds into the KARI N-terminal Rossmann domain; that stretch reads ARMYYDEDAN…GGTRAGVLET (181 aa). Residues 25–28, Ser-51, Ser-53, and 83–86 contribute to the NADP(+) site; these read YGSQ and DEVQ. His-108 is an active-site residue. Gly-134 provides a ligand contact to NADP(+). The KARI C-terminal knotted domain maps to 183–328; the sequence is TFREETETDL…KDLRAMFSWL (146 aa). Mg(2+)-binding residues include Asp-191, Glu-195, Glu-227, and Glu-231. Ser-252 serves as a coordination point for substrate.

Belongs to the ketol-acid reductoisomerase family. It depends on Mg(2+) as a cofactor.

It carries out the reaction (2R)-2,3-dihydroxy-3-methylbutanoate + NADP(+) = (2S)-2-acetolactate + NADPH + H(+). The catalysed reaction is (2R,3R)-2,3-dihydroxy-3-methylpentanoate + NADP(+) = (S)-2-ethyl-2-hydroxy-3-oxobutanoate + NADPH + H(+). Its pathway is amino-acid biosynthesis; L-isoleucine biosynthesis; L-isoleucine from 2-oxobutanoate: step 2/4. The protein operates within amino-acid biosynthesis; L-valine biosynthesis; L-valine from pyruvate: step 2/4. In terms of biological role, involved in the biosynthesis of branched-chain amino acids (BCAA). Catalyzes an alkyl-migration followed by a ketol-acid reduction of (S)-2-acetolactate (S2AL) to yield (R)-2,3-dihydroxy-isovalerate. In the isomerase reaction, S2AL is rearranged via a Mg-dependent methyl migration to produce 3-hydroxy-3-methyl-2-ketobutyrate (HMKB). In the reductase reaction, this 2-ketoacid undergoes a metal-dependent reduction by NADPH to yield (R)-2,3-dihydroxy-isovalerate. This is Ketol-acid reductoisomerase (NADP(+)) from Nostoc punctiforme (strain ATCC 29133 / PCC 73102).